The chain runs to 249 residues: Proteasome subunit alpha (249 aa).

The tract at residues 229–249 is disordered; the sequence is EAREAEEAAEAQSSEDGGATD.

Belongs to the peptidase T1A family. In terms of assembly, the 20S proteasome core is composed of 14 alpha and 14 beta subunits that assemble into four stacked heptameric rings, resulting in a barrel-shaped structure. The two inner rings, each composed of seven catalytic beta subunits, are sandwiched by two outer rings, each composed of seven alpha subunits. The catalytic chamber with the active sites is on the inside of the barrel. Has a gated structure, the ends of the cylinder being occluded by the N-termini of the alpha-subunits. Is capped by the proteasome-associated ATPase, ARC.

It localises to the cytoplasm. Its pathway is protein degradation; proteasomal Pup-dependent pathway. The formation of the proteasomal ATPase ARC-20S proteasome complex, likely via the docking of the C-termini of ARC into the intersubunit pockets in the alpha-rings, may trigger opening of the gate for substrate entry. Interconversion between the open-gate and close-gate conformations leads to a dynamic regulation of the 20S proteasome proteolysis activity. In terms of biological role, component of the proteasome core, a large protease complex with broad specificity involved in protein degradation. The polypeptide is Proteasome subunit alpha (Thermobifida fusca (strain YX)).